The following is a 313-amino-acid chain: MITFPHRHLLGIKGLTEQDITLLLDRADEAVKISRQREKKTSSLRGLTQINLFFEASTRTQSSFELAGKRLGADVMNMSVGNSSVKKGETLIDTAMTLNAMHPDVLVVRHSSAGAASLLAQKVSCSVVNAGDGQHEHPTQALLDALTIRRAKGKLSRIIVAICGDVLHSRVARSNILLLNQMGARVRVVAPATLLPAGIAEMGAEVYHSMAEGLKDADVVMMLRLQRERMAGSFVPSVREYFHYYGLDAEKLKAAKDDALVMHPGPMNRGVEIASEIADGPQSVIEQQVEMGVAVRMAVMETLLLSQNQGPRV.

Residues R59 and T60 each contribute to the carbamoyl phosphate site. K87 contributes to the L-aspartate binding site. Residues R109, H137, and Q140 each coordinate carbamoyl phosphate. Residues R170 and R224 each coordinate L-aspartate. Carbamoyl phosphate-binding residues include G265 and P266.

The protein belongs to the aspartate/ornithine carbamoyltransferase superfamily. ATCase family. As to quaternary structure, heterododecamer (2C3:3R2) of six catalytic PyrB chains organized as two trimers (C3), and six regulatory PyrI chains organized as three dimers (R2).

The enzyme catalyses carbamoyl phosphate + L-aspartate = N-carbamoyl-L-aspartate + phosphate + H(+). The protein operates within pyrimidine metabolism; UMP biosynthesis via de novo pathway; (S)-dihydroorotate from bicarbonate: step 2/3. In terms of biological role, catalyzes the condensation of carbamoyl phosphate and aspartate to form carbamoyl aspartate and inorganic phosphate, the committed step in the de novo pyrimidine nucleotide biosynthesis pathway. This chain is Aspartate carbamoyltransferase catalytic subunit, found in Sinorhizobium medicae (strain WSM419) (Ensifer medicae).